Here is a 198-residue protein sequence, read N- to C-terminus: Small ribosomal subunit protein uS5 (198 aa).

In terms of domain architecture, S5 DRBM spans 46–109 (LEDDVLEISM…NNAKLNIFKV (64 aa)).

This sequence belongs to the universal ribosomal protein uS5 family. Part of the 30S ribosomal subunit. Contacts protein S4.

Functionally, with S4 and S12 plays an important role in translational accuracy. The sequence is that of Small ribosomal subunit protein uS5 from Archaeoglobus fulgidus (strain ATCC 49558 / DSM 4304 / JCM 9628 / NBRC 100126 / VC-16).